Consider the following 348-residue polypeptide: Rhodopsin (348 aa).

Residues 1–33 (TEGPYFYIPMVNTTGIVRSPYEYPQYYLVNPAA) lie on the Extracellular side of the membrane. Asn-12 carries an N-linked (GlcNAc...) asparagine glycan. Residues 34–58 (YAMLGAYMFFLIIVGFPVNFMTLYV) traverse the membrane as a helical segment. Residues 59–70 (TLEHKKLRTPLN) are Cytoplasmic-facing. Residues 71–93 (YILLNLAVADLFMVIGGFTTTIY) traverse the membrane as a helical segment. The Extracellular segment spans residues 94-107 (TSMHGYFVLGRLGC). Cysteines 107 and 184 form a disulfide. The helical transmembrane segment at 108-130 (NIEGFFATLGGMISLWSLAVLAI) threads the bilayer. The 'Ionic lock' involved in activated form stabilization motif lies at 131 to 133 (ERW). Residues 131-149 (ERWVVVCKPISNFRFGENH) are Cytoplasmic-facing. A helical transmembrane segment spans residues 150–170 (AIMGVSLTWAMALACTVPPLV). Residues 171 to 199 (GWSRYIPEGMQCSCGIDYYTRAEGFNNES) lie on the Extracellular side of the membrane. Residue Asn-197 is glycosylated (N-linked (GlcNAc...) asparagine). A helical membrane pass occupies residues 200–221 (FVLYMFFCHFTIPLTIIFFCYG). The Cytoplasmic portion of the chain corresponds to 222 to 249 (RLLCAVKEAAAAQQESETTQRAEREVTR). The helical transmembrane segment at 250-271 (MVIIMVIGFLICWLPYASVAWF) threads the bilayer. The Extracellular portion of the chain corresponds to 272–283 (IFTHQGSEFGPL). A helical transmembrane segment spans residues 284-305 (FMTIPAFFAKSSSIYNPMIYIC). Lys-293 bears the N6-(retinylidene)lysine mark. The Cytoplasmic segment spans residues 306–348 (MNKQFRHCMITTLFCGKNPFEGEEEGASSTKTEASSASSVSPA). Cys-320 carries the S-palmitoyl cysteine lipid modification. The interval 327-348 (GEEEGASSTKTEASSASSVSPA) is disordered. Residues 332 to 348 (ASSTKTEASSASSVSPA) show a composition bias toward low complexity.

The protein belongs to the G-protein coupled receptor 1 family. Opsin subfamily. Post-translationally, phosphorylated on some or all of the serine and threonine residues present in the C-terminal region. In terms of processing, contains one covalently linked retinal chromophore.

It localises to the membrane. The protein resides in the cell projection. It is found in the cilium. Its subcellular location is the photoreceptor outer segment. Photoreceptor required for image-forming vision at low light intensity. While most salt water fish species use retinal as chromophore, most freshwater fish use 3-dehydroretinal, or a mixture of retinal and 3-dehydroretinal. Light-induced isomerization of 11-cis to all-trans retinal triggers a conformational change that activates signaling via G-proteins. Subsequent receptor phosphorylation mediates displacement of the bound G-protein alpha subunit by arrestin and terminates signaling. The protein is Rhodopsin (rho) of Sargocentron microstoma (Smallmouth squirrelfish).